Here is a 247-residue protein sequence, read N- to C-terminus: ATP synthase subunit a (247 aa).

Transmembrane regions (helical) follow at residues 24 to 44 (IAFT…SLLM), 82 to 102 (FFPF…VGIV), 112 to 132 (IIVT…YGFY), 141 to 161 (LFVP…IEVI), 194 to 214 (MLGA…ALVV), and 219 to 239 (LELL…CIYI).

The protein belongs to the ATPase A chain family. In terms of assembly, F-type ATPases have 2 components, CF(1) - the catalytic core - and CF(0) - the membrane proton channel. CF(1) has five subunits: alpha(3), beta(3), gamma(1), delta(1), epsilon(1). CF(0) has three main subunits: a(1), b(2) and c(9-12). The alpha and beta chains form an alternating ring which encloses part of the gamma chain. CF(1) is attached to CF(0) by a central stalk formed by the gamma and epsilon chains, while a peripheral stalk is formed by the delta and b chains.

The protein resides in the cell inner membrane. Functionally, key component of the proton channel; it plays a direct role in the translocation of protons across the membrane. The protein is ATP synthase subunit a of Nitrobacter hamburgensis (strain DSM 10229 / NCIMB 13809 / X14).